The primary structure comprises 309 residues: Olfactory receptor 1A2 (309 aa).

Residues 1–25 (MKKENQSFNLDFILLGVTSQQEQNN) are Extracellular-facing. The N-linked (GlcNAc...) asparagine glycan is linked to N5. Residues 26 to 49 (VFFVIFLCIYPITLTGNLLIILAI) traverse the membrane as a helical segment. The Cytoplasmic segment spans residues 50–57 (CADIRLHN). Residues 58–79 (PMYFLLANLSLVDIIFSSVTIP) traverse the membrane as a helical segment. At 80–100 (KVLANHLLGSKFISFGGCLMQ) the chain is on the extracellular side. A disulfide bond links C97 and C189. Residues 101-120 (MYFMIALAKADSYTLAAMAY) traverse the membrane as a helical segment. Residues 121–139 (DRAVAISCPLHYTTIMSPR) are Cytoplasmic-facing. Residues 140-158 (SCILLIAGSWVIGNTSALP) form a helical membrane-spanning segment. Residues 159–195 (HTLLTASLSFCGNQEVANFYCDIMPLLKLSCSDVHFN) lie on the Extracellular side of the membrane. The helical transmembrane segment at 196-218 (VKMMYLGVGVFSLPLLCIIVSYV) threads the bilayer. Over 219 to 235 (QVFSTVFQVPSTKSLFK) the chain is Cytoplasmic. The chain crosses the membrane as a helical span at residues 236–258 (AFCTCGSHLTVVFLYYGTTMGMY). The Extracellular portion of the chain corresponds to 259–270 (FRPLTSYSPKDA). A helical transmembrane segment spans residues 271 to 290 (VITVMYVAVTPALNPFIYSL). At 291–309 (RNWDMKAALQKLFSKRISS) the chain is on the cytoplasmic side.

Belongs to the G-protein coupled receptor 1 family.

It is found in the cell membrane. Its function is as follows. Odorant receptor. The polypeptide is Olfactory receptor 1A2 (OR1A2) (Homo sapiens (Human)).